The following is a 184-amino-acid chain: uncharacterized protein (184 aa).

The signal sequence occupies residues 1–20 (MTLRKILALTCLLLPMMASA).

This sequence to H.influenzae HI_0045.

Its subcellular location is the periplasm. This is an uncharacterized protein from Escherichia coli (strain K12).